We begin with the raw amino-acid sequence, 705 residues long: MTKLGFLRLSYEKQDTLLKLLILSMAAVLSFSTRLFAVLRFESVIHEFDPYFNYRTTRFLAEEGFYKFHNWFDDRAWYPLGRIIGGTIYPGLMITSAAIYHVLHFFHITIDIRNVCVFLAPLFSSFTTIVTYHLTKELKDAGAGLLAAAMIAVVPGYISRSVAGSYDNEGIAIFCMLLTYYMWIKAVKTGSIYWAAKCALAYFYMVSSWGGYVFLINLIPLHVLVLMLTGRFSHRIYVAYCTVYCLGTILSMQISFVGFQPVLSSEHMAAFGVFGLCQIHAFVDYLRSKLNPQQFEVLFRSVISLVGFVLLTIGALLMLTGKISPWTGRFYSLLDPSYAKNNIPIIASVSEHQPTTWSSYYFDLQLLVFMFPVGLYYCFSNLSDARIFIIMYGVTSMYFSAVMVRLMLVLAPVMCILSGIGVSQVLSTYMKNLDISRQDKKSKKQQDSTYPIKNEVASGMILVMAFFLITYTFHSTWVTSEAYSSPSIVLSARGGDGSRIIFDDFREAYYWLRHNTPEDAKVMSWWDYGYQITAMANRTILVDNNTWNNTHISRVGQAMASTEEKAYEIMRELDVSYVLVIFGGLTGYSSDDINKFLWMVRIGGSTDTGKHIKEHDYYTPTGEFRVDREGSPVLLNCLMYKMCYYRFGQVYTEAKRPLGYDRVRNAEIGNKDFELDVLEEAYTTEHWLVRIYKVKDLDNRGLSRT.

At 1–17 the chain is on the cytoplasmic side; that stretch reads MTKLGFLRLSYEKQDTL. Residues 18-38 form a helical membrane-spanning segment; that stretch reads LKLLILSMAAVLSFSTRLFAV. At 39 to 119 the chain is on the lumenal side; sequence LRFESVIHEF…IDIRNVCVFL (81 aa). Positions 47 to 49 match the DXD motif 1 motif; that stretch reads EFD. Mn(2+) is bound at residue Asp49. Residues 120 to 138 traverse the membrane as a helical segment; that stretch reads APLFSSFTTIVTYHLTKEL. The Cytoplasmic segment spans residues 139-140; sequence KD. A helical membrane pass occupies residues 141-158; it reads AGAGLLAAAMIAVVPGYI. Topologically, residues 159 to 169 are lumenal; it reads SRSVAGSYDNE. Residues Asp167 and Glu169 each contribute to the Mn(2+) site. Positions 167–169 match the DXD motif 2 motif; that stretch reads DNE. The helical transmembrane segment at 170-189 threads the bilayer; that stretch reads GIAIFCMLLTYYMWIKAVKT. Topologically, residues 190 to 191 are cytoplasmic; sequence GS. The helical transmembrane segment at 192–206 threads the bilayer; the sequence is IYWAAKCALAYFYMV. Topologically, residues 207–211 are lumenal; it reads SSWGG. A helical transmembrane segment spans residues 212-228; that stretch reads YVFLINLIPLHVLVLML. The Cytoplasmic segment spans residues 229–233; sequence TGRFS. The chain crosses the membrane as a helical span at residues 234–259; it reads HRIYVAYCTVYCLGTILSMQISFVGF. Over 260–267 the chain is Lumenal; it reads QPVLSSEH. A helical transmembrane segment spans residues 268–287; sequence MAAFGVFGLCQIHAFVDYLR. At 288 to 300 the chain is on the cytoplasmic side; it reads SKLNPQQFEVLFR. The helical transmembrane segment at 301-321 threads the bilayer; it reads SVISLVGFVLLTIGALLMLTG. The Lumenal portion of the chain corresponds to 322-356; that stretch reads KISPWTGRFYSLLDPSYAKNNIPIIASVSEHQPTT. Residues 348–351 carry the SVSE motif motif; sequence SVSE. A helical transmembrane segment spans residues 357–379; the sequence is WSSYYFDLQLLVFMFPVGLYYCF. The Cytoplasmic portion of the chain corresponds to 380-385; the sequence is SNLSDA. The helical transmembrane segment at 386–402 threads the bilayer; it reads RIFIIMYGVTSMYFSAV. The Lumenal portion of the chain corresponds to 403 to 406; it reads MVRL. Arg405 serves as a coordination point for dolichyl diphosphooligosaccharide. A helical membrane pass occupies residues 407–428; it reads MLVLAPVMCILSGIGVSQVLST. Residues 429-453 lie on the Cytoplasmic side of the membrane; that stretch reads YMKNLDISRQDKKSKKQQDSTYPIK. The helical transmembrane segment at 454–473 threads the bilayer; sequence NEVASGMILVMAFFLITYTF. The Lumenal portion of the chain corresponds to 474-705; the sequence is HSTWVTSEAY…DLDNRGLSRT (232 aa). The tract at residues 525-527 is interacts with target acceptor peptide in protein substrate; the sequence is WWD. The WWDYG motif signature appears at 525-529; the sequence is WWDYG. Tyr530 lines the dolichyl diphosphooligosaccharide pocket. 2 N-linked (GlcNAc...) asparagine glycosylation sites follow: Asn537 and Asn544. Residue Asn548 is glycosylated (N-linked (GlcNAc...) (high mannose) asparagine). The DK motif motif lies at 592–599; that stretch reads DINKFLWM.

The protein belongs to the STT3 family. Component of the oligosaccharyltransferase (OST) complex. There are 2 OST complexes, OST-A and OST-B, which contain STT3A or STT3B as catalytic subunit, respectively. OST-A and OST-B contain common core subunits RPN1, RPN2, OST48, OST4, DAD1 and TMEM258, and OST-A contains DC2/OSTC and KRTCAP2/KCP2 specific accessory subunits. OST-A complex assembly occurs through the formation of 3 subcomplexes. Subcomplex 1 contains RPN1 and TMEM258, subcomplex 2 contains the OST-A-specific subunits STT3A, DC2/OSTC, and KCP2 as well as the core subunit OST4, and subcomplex 3 contains RPN2, DAD1, and OST48. The OST-A complex can form stable complexes with the Sec61 complex or with both the Sec61 and TRAP complexes. It depends on Mg(2+) as a cofactor. Requires Mn(2+) as cofactor.

It is found in the endoplasmic reticulum membrane. It catalyses the reaction a di-trans,poly-cis-dolichyl diphosphooligosaccharide + L-asparaginyl-[protein] = N(4)-(oligosaccharide-(1-&gt;4)-N-acetyl-beta-D-glucosaminyl-(1-&gt;4)-N-acetyl-beta-D-glucosaminyl)-L-asparaginyl-[protein] + a di-trans,poly-cis-dolichyl diphosphate + H(+). Its pathway is protein modification; protein glycosylation. Catalytic subunit of the oligosaccharyl transferase (OST) complex that catalyzes the initial transfer of a defined glycan (Glc(3)Man(9)GlcNAc(2) in eukaryotes) from the lipid carrier dolichol-pyrophosphate to an asparagine residue within an Asn-X-Ser/Thr consensus motif in nascent polypeptide chains, the first step in protein N-glycosylation. N-glycosylation occurs cotranslationally and the complex associates with the Sec61 complex at the channel-forming translocon complex that mediates protein translocation across the endoplasmic reticulum (ER). All subunits are required for a maximal enzyme activity. This subunit contains the active site and the acceptor peptide and donor lipid-linked oligosaccharide (LLO) binding pockets. STT3A is present in the majority of OST complexes and mediates cotranslational N-glycosylation of most sites on target proteins, while STT3B-containing complexes are required for efficient post-translational glycosylation and mediate glycosylation of sites that have been skipped by STT3A. STT3A-containing OST-A complex is also required to prevent hyperglycosylation of some target proteins by preventing glycosylation of facultative sites before folding of target proteins is completed. This Bos taurus (Bovine) protein is Dolichyl-diphosphooligosaccharide--protein glycosyltransferase subunit STT3A.